The sequence spans 233 residues: Biosynthetic peptidoglycan transglycosylase (233 aa).

The helical transmembrane segment at 17–37 (IVLAVLALVILPYALIFFYVL) threads the bilayer.

This sequence belongs to the glycosyltransferase 51 family.

It is found in the cell inner membrane. The enzyme catalyses [GlcNAc-(1-&gt;4)-Mur2Ac(oyl-L-Ala-gamma-D-Glu-L-Lys-D-Ala-D-Ala)](n)-di-trans,octa-cis-undecaprenyl diphosphate + beta-D-GlcNAc-(1-&gt;4)-Mur2Ac(oyl-L-Ala-gamma-D-Glu-L-Lys-D-Ala-D-Ala)-di-trans,octa-cis-undecaprenyl diphosphate = [GlcNAc-(1-&gt;4)-Mur2Ac(oyl-L-Ala-gamma-D-Glu-L-Lys-D-Ala-D-Ala)](n+1)-di-trans,octa-cis-undecaprenyl diphosphate + di-trans,octa-cis-undecaprenyl diphosphate + H(+). Its pathway is cell wall biogenesis; peptidoglycan biosynthesis. Peptidoglycan polymerase that catalyzes glycan chain elongation from lipid-linked precursors. This chain is Biosynthetic peptidoglycan transglycosylase, found in Rhizobium leguminosarum bv. trifolii (strain WSM2304).